The primary structure comprises 311 residues: Pyrimidine-specific ribonucleoside hydrolase RihA (311 aa).

The active site involves H240.

This sequence belongs to the IUNH family. RihA subfamily.

Its function is as follows. Hydrolyzes with equal efficiency cytidine or uridine to ribose and cytosine or uracil, respectively. This chain is Pyrimidine-specific ribonucleoside hydrolase RihA, found in Escherichia coli O127:H6 (strain E2348/69 / EPEC).